The primary structure comprises 466 residues: SVGFKAGVKDYKLNYYTPEYTPKDTDTLAAFRVTPQPGVPPEEAGAAVAAESSTGTWTTVWTDGLTSLDRYKGRCYHIEPVAGEENQYICYVAYPLDLFEEGSVTNMFTSIVGNVFGFKALRALRLEDLRIPVAYVKTFQGPPHGIQVERDKLNKYGRPLLGCTIKPKLGLSAKNYGRAVYECLRGGLDFTKDDENVNSQPFMRWRDRFLFCAEALYKAQAETGEIKGHYLNATAGTCEEMIKRAVFARELGVPIVMHDYLTGGFTANTSLAHYCRDNGLLLHIHRAMHAVIDRQKNHGIHFRVLAKALRMSGGDHIHSGTVVGKLEGEREITLGFVDLLRDDFIEKDRSRGIYFTQDWVSLPGVLPVASGGIHVWHMPALTEIFGDDSVLQFGGGTLGHPWGNRPGAVANRVALEACVQARNEGRDLAREGNEIIREACKWSLELAAACEVWKEIKFEFEAMDTL.

Lys-5 carries the post-translational modification N6,N6,N6-trimethyllysine. The substrate site is built by Asn-114 and Thr-164. The active-site Proton acceptor is Lys-166. Lys-168 serves as a coordination point for substrate. The Mg(2+) site is built by Lys-192, Asp-194, and Glu-195. Lys-192 carries the post-translational modification N6-carboxylysine. Residue His-285 is the Proton acceptor of the active site. Substrate is bound by residues Arg-286, His-318, and Ser-370.

The protein belongs to the RuBisCO large chain family. Type I subfamily. In terms of assembly, heterohexadecamer of 8 large chains and 8 small chains; disulfide-linked. The disulfide link is formed within the large subunit homodimers. Requires Mg(2+) as cofactor. Post-translationally, the disulfide bond which can form in the large chain dimeric partners within the hexadecamer appears to be associated with oxidative stress and protein turnover.

Its subcellular location is the plastid. The protein localises to the chloroplast. The catalysed reaction is 2 (2R)-3-phosphoglycerate + 2 H(+) = D-ribulose 1,5-bisphosphate + CO2 + H2O. It carries out the reaction D-ribulose 1,5-bisphosphate + O2 = 2-phosphoglycolate + (2R)-3-phosphoglycerate + 2 H(+). Its function is as follows. RuBisCO catalyzes two reactions: the carboxylation of D-ribulose 1,5-bisphosphate, the primary event in carbon dioxide fixation, as well as the oxidative fragmentation of the pentose substrate in the photorespiration process. Both reactions occur simultaneously and in competition at the same active site. This Caltha palustris (Yellow marsh marigold) protein is Ribulose bisphosphate carboxylase large chain.